We begin with the raw amino-acid sequence, 458 residues long: Probable mitochondrial chaperone BCS1-B (458 aa).

Topologically, residues 1–26 (MENVITNNNKGLPKSILKFIPEPIQP) are mitochondrial intermembrane. Residues 27–47 (LFENPFFSAGFGLIGVGSILA) traverse the membrane as a helical segment. The Mitochondrial matrix portion of the chain corresponds to 48-458 (MGRKGFQQAM…INNLNELIKK (411 aa)). 248–255 (GPPGTGKS) is an ATP binding site.

Belongs to the AAA ATPase family. BCS1 subfamily.

It localises to the mitochondrion inner membrane. The enzyme catalyses ATP + H2O = ADP + phosphate + H(+). Its function is as follows. Chaperone necessary for the assembly of mitochondrial respiratory chain complex III. This Dictyostelium discoideum (Social amoeba) protein is Probable mitochondrial chaperone BCS1-B (bcsl1b).